A 201-amino-acid polypeptide reads, in one-letter code: Pyridoxine/pyridoxamine 5'-phosphate oxidase (201 aa).

FMN is bound by residues 49–54 (RMVLLK), 64–65 (YT), lysine 71, and glutamine 93. Residue lysine 54 participates in substrate binding. Residues tyrosine 111, arginine 115, and serine 119 each contribute to the substrate site. FMN-binding positions include 128–129 (QS) and tryptophan 172. A substrate-binding site is contributed by 178–180 (RLH). Arginine 182 provides a ligand contact to FMN.

The protein belongs to the pyridoxamine 5'-phosphate oxidase family. In terms of assembly, homodimer. The cofactor is FMN.

The catalysed reaction is pyridoxamine 5'-phosphate + O2 + H2O = pyridoxal 5'-phosphate + H2O2 + NH4(+). The enzyme catalyses pyridoxine 5'-phosphate + O2 = pyridoxal 5'-phosphate + H2O2. Its pathway is cofactor metabolism; pyridoxal 5'-phosphate salvage; pyridoxal 5'-phosphate from pyridoxamine 5'-phosphate: step 1/1. It functions in the pathway cofactor metabolism; pyridoxal 5'-phosphate salvage; pyridoxal 5'-phosphate from pyridoxine 5'-phosphate: step 1/1. Functionally, catalyzes the oxidation of either pyridoxine 5'-phosphate (PNP) or pyridoxamine 5'-phosphate (PMP) into pyridoxal 5'-phosphate (PLP). This is Pyridoxine/pyridoxamine 5'-phosphate oxidase from Roseobacter denitrificans (strain ATCC 33942 / OCh 114) (Erythrobacter sp. (strain OCh 114)).